The sequence spans 596 residues: Alpha-1,3-galactosidase A (596 aa).

An N-terminal signal peptide occupies residues 1–21; that stretch reads MQNPVASLLFILAMLTGPCPA. Residues 23-57 are disordered; sequence DYPERTERTQSAGNHVWHIDPDKGNDGNPGTAPST. PbH1 repeat units lie at residues 351 to 373, 482 to 504, 515 to 537, and 547 to 569; these read RGKI…NVHG, RKPV…LVED, VRNM…QIVP, and HRNI…RIRH.

Belongs to the glycosyl hydrolase 110 family. A subfamily.

It carries out the reaction Hydrolysis of terminal, non-reducing branched (1-&gt;3)-alpha-D-galactosidic residues, producing free D-galactose.. It catalyses the reaction Hydrolysis of terminal, non-reducing alpha-D-galactose residues in alpha-D-galactosides, including galactose oligosaccharides, galactomannans and galactolipids.. Functionally, alpha-galactosidase that specifically removes branched alpha-1,3-linked galactose residues present in blood group B antigens. Has no activity toward linear alpha-1,3-linked galactose residues. The chain is Alpha-1,3-galactosidase A (glaA) from Akkermansia muciniphila (strain ATCC BAA-835 / DSM 22959 / JCM 33894 / BCRC 81048 / CCUG 64013 / CIP 107961 / Muc).